Consider the following 472-residue polypeptide: Glutamate--tRNA ligase 2 (472 aa).

The 'HIGH' region motif lies at Pro-10–Gly-20. Cys-99, Cys-101, Cys-126, and Asp-128 together coordinate Zn(2+). A compositionally biased stretch (basic and acidic residues) spans Glu-112–Asp-130. The interval Glu-112–Val-137 is disordered. The 'KMSKS' region signature appears at Arg-240–Arg-244. Position 243 (Lys-243) interacts with ATP.

This sequence belongs to the class-I aminoacyl-tRNA synthetase family. Glutamate--tRNA ligase type 1 subfamily. In terms of assembly, monomer. Zn(2+) serves as cofactor.

The protein resides in the cytoplasm. The enzyme catalyses tRNA(Glu) + L-glutamate + ATP = L-glutamyl-tRNA(Glu) + AMP + diphosphate. In terms of biological role, catalyzes the attachment of glutamate to tRNA(Glu) in a two-step reaction: glutamate is first activated by ATP to form Glu-AMP and then transferred to the acceptor end of tRNA(Glu). This chain is Glutamate--tRNA ligase 2, found in Halorhodospira halophila (strain DSM 244 / SL1) (Ectothiorhodospira halophila (strain DSM 244 / SL1)).